Consider the following 186-residue polypeptide: CoB--CoM heterodisulfide reductase iron-sulfur subunit C 2 (186 aa).

2 consecutive 4Fe-4S ferredoxin-type domains span residues 26–56 (GEDI…AYRT) and 67–99 (LDDV…TEII). Residues Cys36, Cys39, Cys42, Cys46, Cys79, Cys82, Cys85, and Cys89 each contribute to the [4Fe-4S] cluster site.

The protein belongs to the HdrC family. In terms of assembly, the heterodisulfide reductase is composed of three subunits; HdrA, HdrB and HdrC. The cofactor is [4Fe-4S] cluster.

Its pathway is cofactor metabolism; coenzyme M-coenzyme B heterodisulfide reduction; coenzyme B and coenzyme M from coenzyme M-coenzyme B heterodisulfide: step 1/1. Its function is as follows. Part of a complex that catalyzes the reversible reduction of CoM-S-S-CoB to the thiol-coenzymes H-S-CoM (coenzyme M) and H-S-CoB (coenzyme B). In Methanocaldococcus jannaschii (strain ATCC 43067 / DSM 2661 / JAL-1 / JCM 10045 / NBRC 100440) (Methanococcus jannaschii), this protein is CoB--CoM heterodisulfide reductase iron-sulfur subunit C 2 (hdrC2).